We begin with the raw amino-acid sequence, 351 residues long: N-acetyl-gamma-glutamyl-phosphate reductase (351 aa).

Residue Cys154 is part of the active site.

This sequence belongs to the NAGSA dehydrogenase family. Type 1 subfamily.

Its subcellular location is the cytoplasm. The enzyme catalyses N-acetyl-L-glutamate 5-semialdehyde + phosphate + NADP(+) = N-acetyl-L-glutamyl 5-phosphate + NADPH + H(+). Its pathway is amino-acid biosynthesis; L-arginine biosynthesis; N(2)-acetyl-L-ornithine from L-glutamate: step 3/4. In terms of biological role, catalyzes the NADPH-dependent reduction of N-acetyl-5-glutamyl phosphate to yield N-acetyl-L-glutamate 5-semialdehyde. This Synechocystis sp. (strain ATCC 27184 / PCC 6803 / Kazusa) protein is N-acetyl-gamma-glutamyl-phosphate reductase.